Here is a 923-residue protein sequence, read N- to C-terminus: Periodic tryptophan protein 2 (923 aa).

WD repeat units lie at residues 12 to 52, 53 to 93, 94 to 132, 144 to 183, and 189 to 228; these read GTVY…TFEY, EHRK…LHHF, NFKE…KDRQ, GHFQ…KNLA, and GHRD…SDDD. 2 positions are modified to phosphoserine: Ser225 and Ser232. 8 WD repeats span residues 258 to 297, 300 to 340, 343 to 382, 385 to 424, 428 to 470, 471 to 510, 513 to 552, and 575 to 614; these read ANQA…LIQQ, MGQN…YILK, GHFD…CLAT, EHTS…NFRT, TERI…DALS, GHEG…QQVE, EVYS…QVGN, and ERSK…LLKR. Phosphoserine is present on residues Ser651 and Ser664. The tract at residues 653–674 is disordered; it reads LEDRIDNSLPGSQRGGDLSTRK. One copy of the WD 14 repeat lies at 676-714; that stretch reads RPEVRVTSVQFSPTANAFAAASTEGLLIYSTNDTILFDP. Composition is skewed to acidic residues over residues 869–893 and 911–923; these read KDDA…DEEG and DSSD…KELP. The interval 869 to 923 is disordered; the sequence is KDDADEDNEENEENDVVMESDDEEGWIGFNGKDNKLPLSNENDSSDEEENEKELP. Phosphoserine is present on residues Ser912 and Ser913.

The protein belongs to the WD repeat PWP2 family. As to quaternary structure, interacts with snoRNA U3. Interacts with MPP10. Component of the ribosomal small subunit (SSU) processome composed of at least 40 protein subunits and snoRNA U3.

The protein resides in the nucleus. It localises to the nucleolus. Functionally, required for bud-site selection and cell separation. Also involved in nucleolar processing of pre-18S ribosomal RNA. The protein is Periodic tryptophan protein 2 (PWP2) of Saccharomyces cerevisiae (strain ATCC 204508 / S288c) (Baker's yeast).